The sequence spans 242 residues: Small ribosomal subunit protein uS3 (242 aa).

Positions 39-109 (IRQYVKATLA…QIRINVVEVT (71 aa)) constitute a KH type-2 domain. The segment at 220-242 (KVNQPKRRQQKRRQQYDDRSNEG) is disordered. The segment covering 223–232 (QPKRRQQKRR) has biased composition (basic residues). Over residues 233–242 (QQYDDRSNEG) the composition is skewed to basic and acidic residues.

Belongs to the universal ribosomal protein uS3 family. In terms of assembly, part of the 30S ribosomal subunit. Forms a tight complex with proteins S10 and S14.

Binds the lower part of the 30S subunit head. Binds mRNA in the 70S ribosome, positioning it for translation. The sequence is that of Small ribosomal subunit protein uS3 from Trichodesmium erythraeum (strain IMS101).